A 257-amino-acid chain; its full sequence is Phosphate import ATP-binding protein PstB (257 aa).

An ABC transporter domain is found at 11 to 252; sequence IQVRDLNFYY…PAKKQTEDYI (242 aa). 43 to 50 contacts ATP; sequence GPSGCGKS.

It belongs to the ABC transporter superfamily. Phosphate importer (TC 3.A.1.7) family. As to quaternary structure, the complex is composed of two ATP-binding proteins (PstB), two transmembrane proteins (PstC and PstA) and a solute-binding protein (PstS).

The protein resides in the cell inner membrane. The enzyme catalyses phosphate(out) + ATP + H2O = ADP + 2 phosphate(in) + H(+). Part of the ABC transporter complex PstSACB involved in phosphate import. Responsible for energy coupling to the transport system. The polypeptide is Phosphate import ATP-binding protein PstB (Salmonella paratyphi A (strain ATCC 9150 / SARB42)).